We begin with the raw amino-acid sequence, 632 residues long: MIKTYDSNEYDVIVVGAGHAGCEAALASAHMGQKTLLVTIGLDMVAFMPCNPSVGGPAKGTVVREIDALGGQMGKNIDATYIQMRMLNTGKGPAVRALRAQADKWQYHEYMKDTIENTPNLTLRQAIVDELVVEDGVCKGVITNTGAKYHAKSVVLTTGTAARGKIIIGELMYSSGPNNTTPSIKLSENLEKLGFKLRRFKTGTPPRVNGNTIDYSKTEEEPGDKVPRHFSYESKDENYLQNQISCWMTYTNPVTHEVIRDNLDRAPMFTGVIKGVGPRYCPSIEDKVVRFADKDRHQIFLEPEGKTTKEVYVGDFSTSMPEEVQLKMVHSVAGLEHAEMMRPGYAIEYDVVEPWQLKHTLETKNVKHLFTAGQMNGTSGYEEAAGQGLIAGINAALSAQGKSGFTLGRNDAYIGVLIDDLVTKGTNEPYRLLTSRAEYRLILRHDNADLRLTEYGHKLGLISDDRYQAFEEKKQAIKDTQARLHEITVHVTDEVQDFLKSIGQEPMKAGVKADVFLRRPHVTINDIERLTGQKIDGDRYVKEQVEIGIKYAGYIKKEETRIARLKRQEAKKIPADIDYNMIEGLATEARQKFEKIRPETLAQAERISGVNPADLAILSVYIQNGRYSRVNK.

Residues 16–21 (GAGHAG), Val-128, and Ser-183 contribute to the FAD site. A disordered region spans residues 206-225 (PRVNGNTIDYSKTEEEPGDK). Residues 216-225 (SKTEEEPGDK) are compositionally biased toward basic and acidic residues. Residue 277–291 (GPRYCPSIEDKVVRF) participates in NAD(+) binding. Gln-374 contributes to the FAD binding site.

Belongs to the MnmG family. Homodimer. Heterotetramer of two MnmE and two MnmG subunits. Requires FAD as cofactor.

The protein localises to the cytoplasm. In terms of biological role, NAD-binding protein involved in the addition of a carboxymethylaminomethyl (cmnm) group at the wobble position (U34) of certain tRNAs, forming tRNA-cmnm(5)s(2)U34. In Lactobacillus acidophilus (strain ATCC 700396 / NCK56 / N2 / NCFM), this protein is tRNA uridine 5-carboxymethylaminomethyl modification enzyme MnmG.